Here is a 344-residue protein sequence, read N- to C-terminus: D-arabinose dehydrogenase [NAD(P)+] heavy chain (344 aa).

Y71 functions as the Proton donor in the catalytic mechanism. H131 is a binding site for substrate. The residue at position 151 (T151) is a Phosphothreonine. 241-295 (SPLGSHGAPNLKIPLVKKLAEKYNVTGNDLLISYHIRQGTIVIPRSLNPVRISSS) is a binding site for NADP(+).

The protein belongs to the aldo/keto reductase family. As to quaternary structure, heterodimer of a heavy chain and a light chain.

It is found in the cytoplasm. It carries out the reaction D-arabinose + NADP(+) = D-arabinono-1,4-lactone + NADPH + H(+). The enzyme catalyses D-arabinose + NAD(+) = D-arabinono-1,4-lactone + NADH + H(+). Functionally, catalyzes the oxidation of D-arabinose, L-xylose, L-fucose and L-galactose in the presence of NADP(+). The sequence is that of D-arabinose dehydrogenase [NAD(P)+] heavy chain (ARA1) from Saccharomyces cerevisiae (strain ATCC 204508 / S288c) (Baker's yeast).